Here is a 428-residue protein sequence, read N- to C-terminus: 3-phosphoshikimate 1-carboxyvinyltransferase (428 aa).

3-phosphoshikimate contacts are provided by Lys-23, Ser-24, and Arg-28. Lys-23 serves as a coordination point for phosphoenolpyruvate. Phosphoenolpyruvate-binding residues include Gly-97 and Arg-125. Residues Ser-170, Ser-171, Gln-172, Ser-198, Asp-314, Asn-337, and Lys-341 each coordinate 3-phosphoshikimate. Gln-172 is a binding site for phosphoenolpyruvate. Asp-314 serves as the catalytic Proton acceptor. 3 residues coordinate phosphoenolpyruvate: Arg-345, Arg-387, and Lys-412.

This sequence belongs to the EPSP synthase family. Monomer.

The protein localises to the cytoplasm. The catalysed reaction is 3-phosphoshikimate + phosphoenolpyruvate = 5-O-(1-carboxyvinyl)-3-phosphoshikimate + phosphate. Its pathway is metabolic intermediate biosynthesis; chorismate biosynthesis; chorismate from D-erythrose 4-phosphate and phosphoenolpyruvate: step 6/7. Its function is as follows. Catalyzes the transfer of the enolpyruvyl moiety of phosphoenolpyruvate (PEP) to the 5-hydroxyl of shikimate-3-phosphate (S3P) to produce enolpyruvyl shikimate-3-phosphate and inorganic phosphate. The polypeptide is 3-phosphoshikimate 1-carboxyvinyltransferase (Serratia proteamaculans (strain 568)).